The primary structure comprises 302 residues: tRNA-cytidine(32) 2-sulfurtransferase (302 aa).

Residues 45–50 (SGGKDS) carry the PP-loop motif motif. [4Fe-4S] cluster-binding residues include cysteine 120, cysteine 123, and cysteine 211.

It belongs to the TtcA family. Homodimer. Requires Mg(2+) as cofactor. [4Fe-4S] cluster is required as a cofactor.

Its subcellular location is the cytoplasm. The catalysed reaction is cytidine(32) in tRNA + S-sulfanyl-L-cysteinyl-[cysteine desulfurase] + AH2 + ATP = 2-thiocytidine(32) in tRNA + L-cysteinyl-[cysteine desulfurase] + A + AMP + diphosphate + H(+). The protein operates within tRNA modification. Catalyzes the ATP-dependent 2-thiolation of cytidine in position 32 of tRNA, to form 2-thiocytidine (s(2)C32). The sulfur atoms are provided by the cysteine/cysteine desulfurase (IscS) system. This Aeromonas hydrophila subsp. hydrophila (strain ATCC 7966 / DSM 30187 / BCRC 13018 / CCUG 14551 / JCM 1027 / KCTC 2358 / NCIMB 9240 / NCTC 8049) protein is tRNA-cytidine(32) 2-sulfurtransferase.